The primary structure comprises 408 residues: Argininosuccinate synthase (408 aa).

ATP is bound by residues 10 to 18 and Ala-37; that span reads AYSGGLDTS. Residues Tyr-90 and Ser-95 each coordinate L-citrulline. Residue Gly-120 coordinates ATP. Residues Thr-122, Asn-126, and Asp-127 each contribute to the L-aspartate site. Asn-126 provides a ligand contact to L-citrulline. Arg-130, Ser-181, Ser-190, Glu-266, and Tyr-278 together coordinate L-citrulline.

This sequence belongs to the argininosuccinate synthase family. Type 1 subfamily. In terms of assembly, homotetramer.

It is found in the cytoplasm. The catalysed reaction is L-citrulline + L-aspartate + ATP = 2-(N(omega)-L-arginino)succinate + AMP + diphosphate + H(+). It participates in amino-acid biosynthesis; L-arginine biosynthesis; L-arginine from L-ornithine and carbamoyl phosphate: step 2/3. The chain is Argininosuccinate synthase from Chromobacterium violaceum (strain ATCC 12472 / DSM 30191 / JCM 1249 / CCUG 213 / NBRC 12614 / NCIMB 9131 / NCTC 9757 / MK).